The primary structure comprises 197 residues: Glycerol-3-phosphate acyltransferase (197 aa).

Helical transmembrane passes span 5–25, 70–90, 111–131, and 153–173; these read LILI…VGKI, LPVL…AVIG, VMLF…FIVL, and IFFT…AFIF.

The protein belongs to the PlsY family. In terms of assembly, probably interacts with PlsX.

It is found in the cell membrane. It carries out the reaction an acyl phosphate + sn-glycerol 3-phosphate = a 1-acyl-sn-glycero-3-phosphate + phosphate. The protein operates within lipid metabolism; phospholipid metabolism. Catalyzes the transfer of an acyl group from acyl-phosphate (acyl-PO(4)) to glycerol-3-phosphate (G3P) to form lysophosphatidic acid (LPA). This enzyme utilizes acyl-phosphate as fatty acyl donor, but not acyl-CoA or acyl-ACP. This Geobacillus sp. (strain WCH70) protein is Glycerol-3-phosphate acyltransferase.